The sequence spans 142 residues: 3-hydroxyacyl-[acyl-carrier-protein] dehydratase FabZ (142 aa).

His47 is an active-site residue.

It belongs to the thioester dehydratase family. FabZ subfamily.

It is found in the cytoplasm. The enzyme catalyses a (3R)-hydroxyacyl-[ACP] = a (2E)-enoyl-[ACP] + H2O. Functionally, involved in unsaturated fatty acids biosynthesis. Catalyzes the dehydration of short chain beta-hydroxyacyl-ACPs and long chain saturated and unsaturated beta-hydroxyacyl-ACPs. In Thermoanaerobacter pseudethanolicus (strain ATCC 33223 / 39E) (Clostridium thermohydrosulfuricum), this protein is 3-hydroxyacyl-[acyl-carrier-protein] dehydratase FabZ.